Reading from the N-terminus, the 226-residue chain is MKAIKIAIDGPASSGKSTVAKIIAKNLGYTYLDTGAMYRSATYIALTHGYTDKEVALILEELEKNPISFKKAKGGSQLVFLGDEDVTLAIRQNDVTNNVSWVSALPEIREELVHQQRRIAQAGGIIMDGRDIGTVVLPDAELKIFLVASVEERAERRYKENLEKGIESDFETLKEEIAARDYKDSHRKVSPLKAAEDALIFDTTGVSIDGVVQFIQEKAEKIVDMS.

10 to 18 (GPASSGKST) is a binding site for ATP.

This sequence belongs to the cytidylate kinase family. Type 1 subfamily.

Its subcellular location is the cytoplasm. The catalysed reaction is CMP + ATP = CDP + ADP. It catalyses the reaction dCMP + ATP = dCDP + ADP. The sequence is that of Cytidylate kinase from Streptococcus pyogenes serotype M18 (strain MGAS8232).